The chain runs to 300 residues: Protein sprouty homolog 4 (300 aa).

Met1 is subject to N-acetylmethionine. Disordered regions lie at residues 1-28 (MEPP…SRAP) and 52-114 (DYID…RLLD). 2 stretches are compositionally biased toward low complexity: residues 7-21 (QSSV…MVQP) and 92-108 (SFSG…STSS). Phosphoserine is present on Ser126. The region spanning 167–274 (KCKECASPRT…GYDRLRRPGC (108 aa)) is the SPR domain.

Belongs to the sprouty family. As to quaternary structure, interacts (via C-terminus) with TESK1 (via both C- and N-termini); the interaction inhibits TESK1 kinase activity. Interacts with RAF1. Interacts with CAV1 (via C-terminus). As to expression, expressed in the embryo and adult tissues including heart, brain, lung, kidney, and skeletal muscle.

Its subcellular location is the cytoplasm. It localises to the cell projection. It is found in the ruffle membrane. In terms of biological role, suppresses the insulin receptor and EGFR-transduced MAPK signaling pathway, but does not inhibit MAPK activation by a constitutively active mutant Ras. Probably impairs the formation of GTP-Ras. Inhibits Ras-independent, but not Ras-dependent, activation of RAF1. Represses integrin-mediated cell spreading via inhibition of TESK1-mediated phosphorylation of cofilin. This chain is Protein sprouty homolog 4 (Spry4), found in Mus musculus (Mouse).